The chain runs to 145 residues: Small ribosomal subunit protein bS16 (145 aa).

The tract at residues 82 to 145 (IKERAATNNP…EAAAEEQTEA (64 aa)) is disordered. Positions 95-115 (EPGKKAKERAEERAEKAREAA) are enriched in basic and acidic residues. Residues 116–137 (EAAAAAAAAPAEEAAAEAPAEA) are compositionally biased toward low complexity.

Belongs to the bacterial ribosomal protein bS16 family.

The protein is Small ribosomal subunit protein bS16 of Novosphingobium aromaticivorans (strain ATCC 700278 / DSM 12444 / CCUG 56034 / CIP 105152 / NBRC 16084 / F199).